The chain runs to 308 residues: Putative glutamine amidotransferase Rv2859c (308 aa).

The interval Met-1–Gly-62 is disordered. Composition is skewed to low complexity over residues Pro-13 to Pro-24, Pro-31 to Pro-42, and Pro-49 to Leu-61. A Glutamine amidotransferase type-1 domain is found at Arg-78 to Arg-301. The active-site Nucleophile is the Cys-177. Active-site residues include His-277 and Glu-279. Lys-289 participates in a covalent cross-link: Isoglutamyl lysine isopeptide (Lys-Gln) (interchain with Q-Cter in protein Pup).

This chain is Putative glutamine amidotransferase Rv2859c, found in Mycobacterium tuberculosis (strain ATCC 25618 / H37Rv).